A 902-amino-acid chain; its full sequence is Proline-rich transmembrane protein 4 (902 aa).

The signal sequence occupies residues 1–18; that stretch reads MAGRSCLELGLFCWVLLA. Disordered stretches follow at residues 72–92, 121–149, and 281–333; these read TETH…EEGD, TPWA…SQPR, and SPSS…LLDD. 2 stretches are compositionally biased toward polar residues: residues 122 to 136 and 281 to 302; these read PWAS…SRLS and SPSS…STSG. The next 5 helical transmembrane spans lie at 371-391, 393-413, 432-452, 468-488, and 501-521; these read AGAL…LLPW, CPPG…AGTT, LVWL…LGLA, LAAL…GSAV, and GLHA…SCWG. Phosphoserine is present on Ser-642. Disordered stretches follow at residues 701–723, 774–811, and 839–872; these read AGAN…DFRP, AGPS…SLCG, and PPRP…ASEL. The span at 704–717 shows a compositional bias: polar residues; the sequence is NPTQSTASSPSSDC. Residues 786 to 798 are compositionally biased toward pro residues; the sequence is SPAPPELPSPGAW. Composition is skewed to low complexity over residues 799 to 811 and 843 to 854; these read PPGS…SLCG and SESSPSLPASGS.

It is found in the membrane. This is Proline-rich transmembrane protein 4 (Prrt4) from Mus musculus (Mouse).